The chain runs to 276 residues: ARL14 effector protein (276 aa).

The interval 159-183 is disordered; that stretch reads QTEFAPESGKREKRKLTKNASASSD. Lys176 is covalently cross-linked (Glycyl lysine isopeptide (Lys-Gly) (interchain with G-Cter in SUMO2)). 2 positions are modified to phosphoserine: Ser182 and Ser266.

Interacts with ARL14 and MYO1E.

It is found in the cytoplasm. Its function is as follows. Through its interaction with ARL14 and MYO1E, may connect MHC class II-containing cytoplasmic vesicles to the actin network and hence controls the movement of these vesicles along the actin cytoskeleton in dendritic cells. This is ARL14 effector protein (Arl14ep) from Rattus norvegicus (Rat).